An 801-amino-acid chain; its full sequence is Na(+)/H(+) antiporter subunit A1 (801 aa).

Transmembrane regions (helical) follow at residues 4–25, 30–49, 79–101, 108–127, 131–153, 166–188, 208–230, 243–265, 270–289, 302–324, 339–361, 373–395, 429–451, 472–494, 526–548, 589–611, 621–641, 646–668, 672–694, 707–729, and 767–784; these read LHIAVILPLIFALIIPILYRFF, LGWFVLSVPIVIFIYMLTLI, LGLLFSLLISGIGSLVVLYSIGY, LGNFYCYLLLFMGAMLGVVL, VIILYLFWELTSFSSFLLISFWR, LIITVFGGLSLLGGIILLAIPTQ, FIFAMILIMIGAFTKSAQFPFYI, SAYLHSATMVKAGLYLIARMTPI, QGWVWTVTLVGLITLFWASL, AFSTVSQLGMIMAMLGIGAISYH, AAIFHLINHATFKGALFMITGAV, LGGLLTIMPISFTITVITALSMA, YLFPIIGIVGSVFTFVYSIKFIM, ILMLLSPAILATLVIVFGLFPGI, AFLSTLVIYILGILLIVTFSYWV, NNLVIIFGALILLTFVTIFSVPF, IRIFEVCIVILLLSAAFLILF, LFSIIMLSAVGYAVSVLFIFFKA, ALTQFVVESISTALFLLCFYHLP, LTNALIAGGVGLSVIIIGLIAYG, and LFESSVLGIAGLAVYTMI.

The protein belongs to the CPA3 antiporters (TC 2.A.63) subunit A family. May form a heterooligomeric complex that consists of seven subunits: mnhA1, mnhB1, mnhC1, mnhD1, mnhE1, mnhF1 and mnhG1.

It localises to the cell membrane. Its activity is regulated as follows. Na(+) extrusion is completely inhibited by the H(+) conductor carbonyl cyanide m-chlorophenylhydrazone (CCCP). In terms of biological role, mnh complex is a Na(+)Li(+)/H(+) antiporter involved in Na(+) and/or Li(+) excretion. Na(+)/H(+) antiport consumes a transmembrane electrical potential, and is thus inferred to be electrogenic. Does not transport K(+), Ca(2+) or Mg(2+). The chain is Na(+)/H(+) antiporter subunit A1 (mnhA1) from Staphylococcus aureus.